Here is a 419-residue protein sequence, read N- to C-terminus: D-amino acid dehydrogenase (419 aa).

An FAD-binding site is contributed by 3–17 (VLILGSGVVGVTSAY).

This sequence belongs to the DadA oxidoreductase family. FAD is required as a cofactor.

The catalysed reaction is a D-alpha-amino acid + A + H2O = a 2-oxocarboxylate + AH2 + NH4(+). It functions in the pathway amino-acid degradation; D-alanine degradation; NH(3) and pyruvate from D-alanine: step 1/1. Oxidative deamination of D-amino acids. The polypeptide is D-amino acid dehydrogenase (Chromohalobacter salexigens (strain ATCC BAA-138 / DSM 3043 / CIP 106854 / NCIMB 13768 / 1H11)).